Consider the following 327-residue polypeptide: Serine/threonine-protein phosphatase PP1-beta catalytic subunit (327 aa).

An N-acetylalanine modification is found at alanine 2. Mn(2+) contacts are provided by aspartate 63, histidine 65, aspartate 91, and asparagine 123. Histidine 124 functions as the Proton donor in the catalytic mechanism. Residues histidine 172 and histidine 247 each coordinate Mn(2+). The interval 305–327 (QYGGLNSGRPVTPPRTANPPKKR) is disordered. Residue threonine 316 is modified to Phosphothreonine.

The protein belongs to the PPP phosphatase family. PP-1 subfamily. As to quaternary structure, PP1 comprises a catalytic subunit, PPP1CA, PPP1CB or PPP1CC, which is folded into its native form by inhibitor 2 and glycogen synthetase kinase 3, and then complexed to one or several targeting or regulatory subunits. The targeting or regulatory subunits determine the substrate specificity of PP1. PPP1R12A, PPP1R12B and PPP1R12C mediate binding to myosin. PPP1R3A (in skeletal muscle), PPP1R3B (in liver), PPP1R3C, PPP1R3D and PPP1R3F (in brain) mediate binding to glycogen. PPP1R15A and PPP1R15B mediate binding to EIF2S1. Part of a complex containing PPP1R15B, PP1 and NCK1/2. Interacts with PPP1R7 and PPP1R12C. Interacts with PPP1R16B. Component of the PTW/PP1 phosphatase complex, composed of PPP1R10/PNUTS, TOX4, WDR82, and PPP1CA or PPP1CB or PPP1CC. Interacts with PPP1R8. Interacts with PPP1R12A and NUAK1; the interaction is direct. Interacts with TRIM28; the interaction is weak. Interacts with FOXP3. Interacts with RRP1B. Interacts with SERPINE1. Interacts with LZTR1. Component of the SHOC2-MRAS-PP1c (SMP) complex consisting of SHOC2, GTP-bound M-Ras/MRAS and the catalytic subunit of protein phosphatase 1 (either PPP1CA, PPP1CB or PPP1CC). SHOC2 and PP1c preferably bind M-Ras/MRAS, but they also bind K-Ras/KRAS, N-Ras/NRAS and H-Ras/HRAS; these interactions are GTP-dependent and both SHOC2 and PP1c are required to form a stable complex. Interacts with SHOC2 in the absence of Ras GTPases. The cofactor is Mn(2+).

It localises to the cytoplasm. The protein resides in the nucleus. It is found in the nucleoplasm. The protein localises to the nucleolus. The catalysed reaction is O-phospho-L-seryl-[protein] + H2O = L-seryl-[protein] + phosphate. It catalyses the reaction O-phospho-L-threonyl-[protein] + H2O = L-threonyl-[protein] + phosphate. The enzyme catalyses O-phospho-L-seryl-[myosin light chain] + H2O = L-seryl-[myosin light chain] + phosphate. It carries out the reaction O-phospho-L-threonyl-[myosin light chain] + H2O = L-threonyl-[myosin light chain] + phosphate. Inhibited by the toxins okadaic acid, tautomycin and microcystin Leu-Arg. The phosphatase activity of the PPP1R15A-PP1 complex toward EIF2S1 is specifically inhibited by Salubrinal, a drug that protects cells from endoplasmic reticulum stress. Protein phosphatase that associates with over 200 regulatory proteins to form highly specific holoenzymes which dephosphorylate hundreds of biological targets. Protein phosphatase (PP1) is essential for cell division, it participates in the regulation of glycogen metabolism, muscle contractility and protein synthesis. Involved in regulation of ionic conductances and long-term synaptic plasticity. Component of the PTW/PP1 phosphatase complex, which plays a role in the control of chromatin structure and cell cycle progression during the transition from mitosis into interphase. In balance with CSNK1D and CSNK1E, determines the circadian period length, through the regulation of the speed and rhythmicity of PER1 and PER2 phosphorylation. May dephosphorylate CSNK1D and CSNK1E. Core component of the SHOC2-MRAS-PP1c (SMP) holophosphatase complex that regulates the MAPK pathway activation. The SMP complex specifically dephosphorylates the inhibitory phosphorylation at 'Ser-259' of RAF1 kinase, 'Ser-365' of BRAF kinase and 'Ser-214' of ARAF kinase, stimulating their kinase activities. The SMP complex enhances the dephosphorylation activity and substrate specificity of PP1c. This is Serine/threonine-protein phosphatase PP1-beta catalytic subunit (PPP1CB) from Bos taurus (Bovine).